The sequence spans 85 residues: Large ribosomal subunit protein bL27 (85 aa).

The tract at residues Met1–Leu21 is disordered. The segment covering Ala7–Gln19 has biased composition (polar residues).

It belongs to the bacterial ribosomal protein bL27 family.

The polypeptide is Large ribosomal subunit protein bL27 (Beutenbergia cavernae (strain ATCC BAA-8 / DSM 12333 / CCUG 43141 / JCM 11478 / NBRC 16432 / NCIMB 13614 / HKI 0122)).